The sequence spans 863 residues: Receptor-like protein 9DC3 (863 aa).

A signal peptide spans 1-21 (MGCVKLVFFMLYVFLFQLVSS). Residues 22-812 (SSLPHLCPED…EEDSPMISWQ (791 aa)) are Extracellular-facing. The segment at 24-90 (LPHLCPEDQA…GVHCDETTGQ (67 aa)) is N-cap. 2 N-linked (GlcNAc...) asparagine glycosylation sites follow: Asn-71 and Asn-108. The LRR 1; degenerate repeat unit spans residues 91–114 (VIALDLRCSQLQGKFHSNSSLFQL). LRR repeat units follow at residues 115-138 (SNLKRLDLSNNNFIGSLISPKFGE) and 140-163 (SDLTHLDLSDSSFTGVIPSEISHL). The LRR 4; degenerate repeat unit spans residues 164–190 (SKLHVLLIGDQYGLSIVPHNFEPLLKN). Asn-190, Asn-203, and Asn-211 each carry an N-linked (GlcNAc...) asparagine glycan. LRR repeat units follow at residues 191-213 (LTQLRELNLYEVNLSSTVPSNFS), 214-237 (SHLTTLQLSGTGLRGLLPERVFHL), 240-262 (LEFLDLSYNSQLMVRFPTTKWNS), 264-286 (ASLMKLYVHSVNIADRIPESFSH), 287-311 (LTSLHELDMGYTNLSGPIPKPLWNL), and 312-336 (TNIESLDLRYNHLEGPIPQLPIFEK). N-linked (GlcNAc...) asparagine glycosylation occurs at Asn-261. Asn-299 and Asn-310 each carry an N-linked (GlcNAc...) asparagine glycan. Residues 337–357 (LKKLSLFRNDNLDGGLEFLSF) form an LRR 11; degenerate repeat. LRR repeat units follow at residues 358 to 382 (NTQLERLDLSSNSLTGPIPSNISGL), 383 to 406 (QNLECLYLSSNHLNGSIPSWIFSL), 408 to 428 (SLVELDLSNNTFSGKIQEFKS), 429 to 452 (KTLSAVTLKQNKLKGRIPNSLLNQ), 454 to 476 (NLQLLLLSHNNISGHISSAICNL), 477 to 500 (KTLILLDLGSNNLEGTIPQCVVER), 502 to 524 (EYLSHLDLSKNRLSGTINTTFSV), 525 to 549 (GNILRVISLHGNKLTGKVPRSLINC), 551 to 572 (YLALLDLGNNQLNDTFPNWLGH), 573 to 597 (LSQLKILSLRSNKLHGPIKSSGNTN), 599 to 623 (FTRLQIMDLSYNGFSGNLPESILGN), 667 to 690 (LDSNMIINLSKNRFEGRIPSIIGD), 691 to 714 (LVGLRTLNLSHNVLEGHIPASFQN), 715 to 739 (LSVLESLDLSSNKISGEIPQQLASL), and 741 to 759 (FLEVLNLSHNHLVGCIPKG). N-linked (GlcNAc...) asparagine glycans are attached at residues Asn-378, Asn-396, and Asn-416. Asn-464 carries an N-linked (GlcNAc...) asparagine glycan. A glycan (N-linked (GlcNAc...) asparagine) is linked at Asn-519. Asn-563 carries N-linked (GlcNAc...) asparagine glycosylation. 3 N-linked (GlcNAc...) asparagine glycosylation sites follow: Asn-674, Asn-698, and Asn-714. Residues Asn-746 and Asn-767 are each glycosylated (N-linked (GlcNAc...) asparagine). Residues 760-812 (KQFDSFGNTSYQGNDGLCGFPLSKLCGGDDQVTTPAELDQEEEEEDSPMISWQ) are C-cap/acidic domain. Residues 813 to 833 (GVLVGYGCGLVIGLSVIYIMW) form a helical membrane-spanning segment. Residues 834–863 (STQYPAWFSRMHLKLEQIVTTRMKKHKKRY) are Cytoplasmic-facing.

The protein belongs to the RLP family.

Its subcellular location is the cell membrane. Its function is as follows. Involved in plant defense. Confers resistance to the fungal pathogen C.fulvum through recognition of the AVR9 elicitor protein. In Solanum pimpinellifolium (Currant tomato), this protein is Receptor-like protein 9DC3.